We begin with the raw amino-acid sequence, 356 residues long: Histidinol-phosphate aminotransferase (356 aa).

K214 carries the N6-(pyridoxal phosphate)lysine modification.

It belongs to the class-II pyridoxal-phosphate-dependent aminotransferase family. Histidinol-phosphate aminotransferase subfamily. Homodimer. It depends on pyridoxal 5'-phosphate as a cofactor.

The catalysed reaction is L-histidinol phosphate + 2-oxoglutarate = 3-(imidazol-4-yl)-2-oxopropyl phosphate + L-glutamate. It functions in the pathway amino-acid biosynthesis; L-histidine biosynthesis; L-histidine from 5-phospho-alpha-D-ribose 1-diphosphate: step 7/9. This is Histidinol-phosphate aminotransferase (hisC) from Escherichia coli O157:H7.